Here is a 910-residue protein sequence, read N- to C-terminus: Eukaryotic translation initiation factor 3 subunit C (910 aa).

Residues 1 to 21 form a disordered region; the sequence is MSRFFANGSDSESESSEDEIQ. A compositionally biased stretch (acidic residues) spans 11–20; it reads SESESSEDEI. Ser-34, Ser-165, Ser-176, and Ser-185 each carry phosphoserine. The disordered stretch occupies residues 157–281; sequence FREAPDQESE…KRAEDDEDGE (125 aa). Residues 162–186 show a composition bias toward acidic residues; it reads DQESEAEDEVVAQESDGGDAGDDSD. The span at 193–207 shows a compositional bias: low complexity; it reads EAAPKAVKSAPAKAA. Residues 209–235 show a composition bias toward acidic residues; it reads ADDDDSDDSIDWDSDSESETESSDDEN. Residues 240–268 show a composition bias toward basic and acidic residues; the sequence is MRERFLKRTTEKEEKDDDKRKDKRKEQKV. One can recognise a PCI domain in the interval 639–815; that stretch reads FHMHINLELL…ETVVMHRSEP (177 aa). Positions 847-910 are disordered; the sequence is FFQRGNMGNR…QQQVQTIDEE (64 aa). Residues 862 to 874 are compositionally biased toward low complexity; the sequence is NRNQNNQGGNWLG. The span at 882–891 shows a compositional bias: basic residues; that stretch reads RNRNQRGHHK. Over residues 895–910 the composition is skewed to low complexity; the sequence is DRQQQQQQQVQTIDEE.

The protein belongs to the eIF-3 subunit C family. In terms of assembly, component of the eukaryotic translation initiation factor 3 (eIF-3) complex. The eIF-3 complex interacts with pix.

The protein resides in the cytoplasm. Functionally, component of the eukaryotic translation initiation factor 3 (eIF-3) complex, which is involved in protein synthesis of a specialized repertoire of mRNAs and, together with other initiation factors, stimulates binding of mRNA and methionyl-tRNAi to the 40S ribosome. The eIF-3 complex specifically targets and initiates translation of a subset of mRNAs involved in cell proliferation. The protein is Eukaryotic translation initiation factor 3 subunit C of Drosophila yakuba (Fruit fly).